A 575-amino-acid polypeptide reads, in one-letter code: Arginine--tRNA ligase (575 aa).

A 'HIGH' region motif is present at residues 131 to 141 (ANPTGPLHVGH).

The protein belongs to the class-I aminoacyl-tRNA synthetase family. In terms of assembly, monomer.

It localises to the cytoplasm. It catalyses the reaction tRNA(Arg) + L-arginine + ATP = L-arginyl-tRNA(Arg) + AMP + diphosphate. The chain is Arginine--tRNA ligase from Jannaschia sp. (strain CCS1).